We begin with the raw amino-acid sequence, 192 residues long: E3 ubiquitin-protein ligase RNF185 (192 aa).

The span at 1–27 (MASKGPSASASPENSSAGGPSGSSNGA) shows a compositional bias: low complexity. Residues 1 to 30 (MASKGPSASASPENSSAGGPSGSSNGAGES) are disordered. Residues 1–130 (MASKGPSASA…GGFQGFGFGD (130 aa)) lie on the Cytoplasmic side of the membrane. A required for ubiquitin ligase activity and protection against ER stress-induced cell death region spans residues 29 to 80 (ESGGQDSTFECNICLDTAKDAVISLCGHLFCWPCLHQWLETRPNRQVCPVCK). The RING-type zinc-finger motif lies at 39-80 (CNICLDTAKDAVISLCGHLFCWPCLHQWLETRPNRQVCPVCK). Positions 90 to 123 (PLYGRGSTGQQDPREKTPPRPQGQRPEPENRGGF) are disordered. A helical transmembrane segment spans residues 131-151 (GGFQMSFGIGAFPFGIFATAF). Topologically, residues 152-171 (NINDGRPPPAVPGTPQYVDE) are mitochondrial intermembrane. The helical transmembrane segment at 172–192 (QFLSRLFLFVALVIMFWLLIA) threads the bilayer.

Interacts with ATG5 and BNIP1. Ubiquitously expressed.

The protein resides in the mitochondrion outer membrane. It localises to the endoplasmic reticulum membrane. The catalysed reaction is S-ubiquitinyl-[E2 ubiquitin-conjugating enzyme]-L-cysteine + [acceptor protein]-L-lysine = [E2 ubiquitin-conjugating enzyme]-L-cysteine + N(6)-ubiquitinyl-[acceptor protein]-L-lysine.. It participates in protein modification; protein ubiquitination. Its function is as follows. E3 ubiquitin-protein ligase that regulates selective mitochondrial autophagy by mediating 'Lys-63'-linked polyubiquitination of BNIP1. Acts in the endoplasmic reticulum (ER)-associated degradation (ERAD) pathway, which targets misfolded proteins that accumulate in the endoplasmic reticulum (ER) for ubiquitination and subsequent proteasome-mediated degradation. Protects cells from ER stress-induced apoptosis. Responsible for the cotranslational ubiquitination and degradation of CFTR in the ERAD pathway. Also acts as a regulator of the innate antiviral response by catalyzing 'Lys-27'-linked polyubiquitination of CGAS at 'Lys-173' and 'Lys-384', thereby promoting CGAS cyclic GMP-AMP synthase activity. Preferentially associates with the E2 enzymes UBE2J1 and UBE2J2. In Homo sapiens (Human), this protein is E3 ubiquitin-protein ligase RNF185.